The sequence spans 407 residues: MDPTTSFPKDKIKILLLENIHIAAIKQFEEQGFQVESISSSLPEDKIIEKIKDVHVLGLRSKTKVTEKILSEAKRLLAIGCFCIGTDQVDLIEAEKRGVPVFNSPFCNSRSVAELIICEIITLSRKLGDRSTEMHNKIWRKESANCHEIRGKTLGIIGYGHIGSQLSVLAEAMGMSVLYYDIARRLPLGNSKMCPDMKTLLENSNFVTLHVPDTKETVGLIGEEEINTMKKGSYLLNASRGKVVQIPHLANALRSGHLAGAAVDVYPEEPSANCKDWECELQKCPNTILTPHIGGSTEEAQEAIGLEVSDLIVQFINSGASAGSVNFPEIALPVSPSTHRILNIHNNKPGVLRDINNILSEFNVSAQVLSTRKQIGYIIADVDSEASKEIKKKISSLPNSIKTRVLY.

NAD(+) contacts are provided by residues 161–162 (HI), D181, 238–240 (ASR), and D264. Residue R240 is part of the active site. E269 is an active-site residue. H292 (proton donor) is an active-site residue. NAD(+) is bound at residue 292–295 (HIGG). The region spanning 340 to 407 (RILNIHNNKP…PNSIKTRVLY (68 aa)) is the ACT domain.

It belongs to the D-isomer specific 2-hydroxyacid dehydrogenase family.

The catalysed reaction is (2R)-3-phosphoglycerate + NAD(+) = 3-phosphooxypyruvate + NADH + H(+). It carries out the reaction (R)-2-hydroxyglutarate + NAD(+) = 2-oxoglutarate + NADH + H(+). The protein operates within amino-acid biosynthesis; L-serine biosynthesis; L-serine from 3-phospho-D-glycerate: step 1/3. In terms of biological role, catalyzes the reversible oxidation of 3-phospho-D-glycerate to 3-phosphonooxypyruvate, the first step of the phosphorylated L-serine biosynthesis pathway. Also catalyzes the reversible oxidation of 2-hydroxyglutarate to 2-oxoglutarate. The chain is D-3-phosphoglycerate dehydrogenase (serA) from Dictyostelium discoideum (Social amoeba).